A 416-amino-acid chain; its full sequence is Phosphoglycerate kinase 2 (416 aa).

Residues 28 to 30, Arg44, 65 to 68, Arg122, and Arg162 each bind substrate; these read DMN and HQSR. ATP contacts are provided by residues Glu337 and 362–365; that span reads GGHI.

The protein belongs to the phosphoglycerate kinase family. Monomer.

The protein localises to the cytoplasm. The catalysed reaction is (2R)-3-phosphoglycerate + ATP = (2R)-3-phospho-glyceroyl phosphate + ADP. It functions in the pathway carbohydrate degradation; glycolysis; pyruvate from D-glyceraldehyde 3-phosphate: step 2/5. This Methanosarcina acetivorans (strain ATCC 35395 / DSM 2834 / JCM 12185 / C2A) protein is Phosphoglycerate kinase 2.